The sequence spans 405 residues: Glucose-1-phosphate adenylyltransferase (405 aa).

Alpha-D-glucose 1-phosphate-binding positions include glycine 164, 179–180 (EK), and serine 197.

The protein belongs to the bacterial/plant glucose-1-phosphate adenylyltransferase family. Homotetramer.

It catalyses the reaction alpha-D-glucose 1-phosphate + ATP + H(+) = ADP-alpha-D-glucose + diphosphate. Its pathway is glycan biosynthesis; glycogen biosynthesis. Involved in the biosynthesis of ADP-glucose, a building block required for the elongation reactions to produce glycogen. Catalyzes the reaction between ATP and alpha-D-glucose 1-phosphate (G1P) to produce pyrophosphate and ADP-Glc. The chain is Glucose-1-phosphate adenylyltransferase from Corynebacterium jeikeium (strain K411).